The following is a 191-amino-acid chain: Glycerol-3-phosphate acyltransferase (191 aa).

The next 5 membrane-spanning stretches (helical) occupy residues 10–30, 57–77, 84–104, 118–138, and 158–178; these read LAFIIFVYVIAAIPFGRCISA, FGSVVFMLDFLKAAAPVFLAV, FASTVGFVAVFAHVFSVYMAF, FVLVLPVFIVAVCTWGIFFVL, and YALLELYVFLPILAGTVLIFI.

This sequence belongs to the PlsY family. Probably interacts with PlsX.

Its subcellular location is the cell inner membrane. It carries out the reaction an acyl phosphate + sn-glycerol 3-phosphate = a 1-acyl-sn-glycero-3-phosphate + phosphate. The protein operates within lipid metabolism; phospholipid metabolism. In terms of biological role, catalyzes the transfer of an acyl group from acyl-phosphate (acyl-PO(4)) to glycerol-3-phosphate (G3P) to form lysophosphatidic acid (LPA). This enzyme utilizes acyl-phosphate as fatty acyl donor, but not acyl-CoA or acyl-ACP. This is Glycerol-3-phosphate acyltransferase from Neorickettsia sennetsu (strain ATCC VR-367 / Miyayama) (Ehrlichia sennetsu).